The primary structure comprises 444 residues: C4-dicarboxylate transport protein (444 aa).

Transmembrane regions (helical) follow at residues 17–37 (PFYTHLYVQVLAAIAAGILLG), 57–77 (LVKMIIAPVIFLTVATGIAGM), 92–112 (LYFLTFSTLALIIGLIVANVV), 139–159 (EQSIVGFLTNIIPTTIVGAFA), 161–181 (GDILQVLFFSVLFGIALAMVG), 201–221 (LVAILMKAAPIGAFGAMAFTI), 234–254 (MLIGTFYITSLLFVLVVLGAV), 320–340 (IYMTLAALFIAQATGIQLSWG), and 368–388 (AATLSVVPSVPVAGMALILGI).

It belongs to the dicarboxylate/amino acid:cation symporter (DAACS) (TC 2.A.23) family.

It localises to the cell inner membrane. Its function is as follows. Responsible for the transport of dicarboxylates such as succinate, fumarate, and malate from the periplasm across the membrane. This is C4-dicarboxylate transport protein from Rhizobium johnstonii (strain DSM 114642 / LMG 32736 / 3841) (Rhizobium leguminosarum bv. viciae).